We begin with the raw amino-acid sequence, 132 residues long: Mite allergen Der p 5 (132 aa).

2 immunodominant conformational IgE-binding epitope regions span residues 25–53 and 102–132; these read DYQN…FYLQ and EQYN…KIEV.

It belongs to the mite group 5 allergen family. Monomer. Trimer of homodimers. Oligomerizes in a concentration-dependent manner.

This Dermatophagoides pteronyssinus (European house dust mite) protein is Mite allergen Der p 5 (DERP5).